The following is a 762-amino-acid chain: 1-phosphatidylinositol 4,5-bisphosphate phosphodiesterase delta-4 (762 aa).

Positions 16-124 (LLMQEGMPMR…WMRGLQLLVD (109 aa)) constitute a PH domain. Residues 26-53 (KVRSKSWKKLRYFRLQNDGMTVWHARQA) form a substrate binding region. 3 consecutive EF-hand domains span residues 134 to 169 (RLDQ…MNVE), 170 to 205 (MDQE…LTKR), and 206 to 237 (AEVQ…EQKE). Residues D147, N149, D151, K153, E158, D183, S185, S187, T189, and E194 each contribute to the Ca(2+) site. The short motif at 213–243 (ESFSADGQKLTLLEFLDFLQEEQKERDCTSE) is the GBA element. The PI-PLC X-box domain occupies 290–435 (QDMTQPLNHY…LRRKILVKGK (146 aa)). The active site involves H305. The Ca(2+) site is built by N306, E335, and D337. Residue H350 is part of the active site. E384 lines the Ca(2+) pocket. 2 residues coordinate substrate: K433 and K435. Positions 443 to 471 (LEYEEEEAEPELEESELALESQFETEPEP) are enriched in acidic residues. The segment at 443–483 (LEYEEEEAEPELEESELALESQFETEPEPQEQNLQNKDKKK) is disordered. Phosphoserine is present on S457. In terms of domain architecture, PI-PLC Y-box spans 493-609 (LSSLVIYLKS…GYVLKPDFLR (117 aa)). 2 residues coordinate substrate: S522 and R549. Residues 609–736 (RDIQSSFHPE…QGYRHIHLLS (128 aa)) enclose the C2 domain. Ca(2+) contacts are provided by I650, D652, N676, D705, Y706, and D707. The short motif at 731-734 (HIHL) is the PDZ-binding element.

As to quaternary structure, interacts with GRIP1. In terms of assembly, interacts (via GBA motif) with guanine nucleotide-binding protein G(i) alpha subunit GNAI3 (inactive GDP-bound form); high-affinity interaction. Interacts (via GBA motif) with guanine nucleotide-binding protein G(i) alpha subunit GNAI3 (inactive GDP-bound form); low-affinity interaction. Ca(2+) serves as cofactor. In terms of tissue distribution, highly expressed in skeletal muscle and kidney tissues, and at moderate level in intestinal tissue. Expressed in corneal epithelial cells.

The protein localises to the membrane. It is found in the nucleus. Its subcellular location is the cytoplasm. It localises to the endoplasmic reticulum. The enzyme catalyses a 1,2-diacyl-sn-glycero-3-phospho-(1D-myo-inositol-4,5-bisphosphate) + H2O = 1D-myo-inositol 1,4,5-trisphosphate + a 1,2-diacyl-sn-glycerol + H(+). The catalysed reaction is a 1,2-diacyl-sn-glycero-3-phospho-(1D-myo-inositol) + H2O = 1D-myo-inositol 1-phosphate + a 1,2-diacyl-sn-glycerol + H(+). Hydrolyzes the phosphatidylinositol 4,5-bisphosphate (PIP2) to generate 2 second messenger molecules diacylglycerol (DAG) and inositol 1,4,5-trisphosphate (IP3). DAG mediates the activation of protein kinase C (PKC), while IP3 releases Ca(2+) from intracellular stores. Required for acrosome reaction in sperm during fertilization, probably by acting as an important enzyme for intracellular Ca(2+) mobilization in the zona pellucida-induced acrosome reaction. May play a role in cell growth. Modulates the liver regeneration in cooperation with nuclear PKC. Overexpression up-regulates the Erk signaling pathway and proliferation. Functionally, acts as a non-receptor guanine nucleotide exchange factor which binds to and activates guanine nucleotide-binding protein (G-protein) alpha subunit GNAI3. The protein is 1-phosphatidylinositol 4,5-bisphosphate phosphodiesterase delta-4 of Homo sapiens (Human).